The following is a 383-amino-acid chain: Sulfate adenylyltransferase (383 aa).

This sequence belongs to the sulfate adenylyltransferase family.

The catalysed reaction is sulfate + ATP + H(+) = adenosine 5'-phosphosulfate + diphosphate. It participates in sulfur metabolism; hydrogen sulfide biosynthesis; sulfite from sulfate: step 1/3. The protein is Sulfate adenylyltransferase (sat) of Aeropyrum pernix (strain ATCC 700893 / DSM 11879 / JCM 9820 / NBRC 100138 / K1).